The following is an 82-amino-acid chain: Colonization factor (82 aa).

A signal peptide spans 1 to 33 (MFSSLKNKLNTFKSTLSLGVFLLFSAFANQALA).

It localises to the secreted. The protein is Colonization factor (cep) of Vibrio cholerae serotype O1 (strain ATCC 39315 / El Tor Inaba N16961).